The following is a 171-amino-acid chain: Dual specificity protein phosphatase OPG106 (171 aa).

A dimerization region spans residues 1 to 27; sequence MDKKSLYKYLLLRSTGDMHKAKSPTIM. In terms of domain architecture, Tyrosine-protein phosphatase spans 23–171; the sequence is SPTIMTRVTN…IIEKYVIDKN (149 aa). The active-site Phosphocysteine intermediate is Cys-110.

Belongs to the protein-tyrosine phosphatase family. Non-receptor class dual specificity subfamily. As to quaternary structure, homodimer.

It localises to the virion. The protein localises to the host cytoplasm. It catalyses the reaction O-phospho-L-tyrosyl-[protein] + H2O = L-tyrosyl-[protein] + phosphate. The catalysed reaction is O-phospho-L-seryl-[protein] + H2O = L-seryl-[protein] + phosphate. Functionally, serine/tyrosine phosphatase which down-regulates cellular antiviral response by dephosphorylating activated host STAT1 and blocking interferon (IFN)-stimulated innate immune responses. Dephosphorylates the OPG144 protein. This Bos taurus (Bovine) protein is Dual specificity protein phosphatase OPG106 (OPG106).